We begin with the raw amino-acid sequence, 338 residues long: Heat-inducible transcription repressor HrcA (338 aa).

Belongs to the HrcA family.

Its function is as follows. Negative regulator of class I heat shock genes (grpE-dnaK-dnaJ and groELS operons). Prevents heat-shock induction of these operons. This chain is Heat-inducible transcription repressor HrcA, found in Streptomyces avermitilis (strain ATCC 31267 / DSM 46492 / JCM 5070 / NBRC 14893 / NCIMB 12804 / NRRL 8165 / MA-4680).